A 280-amino-acid chain; its full sequence is Small ribosomal subunit protein uS3 (280 aa).

A KH type-2 domain is found at 38 to 106 (IRRLLSTGLE…QVQLNILEVR (69 aa)). The tract at residues 215 to 280 (AAAAPAGAER…PAAEPQSTES (66 aa)) is disordered. The segment covering 238–280 (SGASGTTATGTEAGRAAASADESTAAGQPAEAAPAAEPQSTES) has biased composition (low complexity).

The protein belongs to the universal ribosomal protein uS3 family. In terms of assembly, part of the 30S ribosomal subunit. Forms a tight complex with proteins S10 and S14.

Its function is as follows. Binds the lower part of the 30S subunit head. Binds mRNA in the 70S ribosome, positioning it for translation. The protein is Small ribosomal subunit protein uS3 of Mycobacterium avium (strain 104).